Here is a 639-residue protein sequence, read N- to C-terminus: Cystathionine gamma-synthase (639 aa).

K443 carries the N6-(pyridoxal phosphate)lysine modification.

The protein belongs to the trans-sulfuration enzymes family. MET7 subfamily. The cofactor is pyridoxal 5'-phosphate.

It is found in the cytoplasm. The protein resides in the nucleus. It catalyses the reaction O-succinyl-L-homoserine + L-cysteine = L,L-cystathionine + succinate + H(+). Its pathway is amino-acid biosynthesis; L-methionine biosynthesis via de novo pathway; L-cystathionine from O-succinyl-L-homoserine: step 1/1. Catalyzes the formation of L-cystathionine from O-succinyl-L-homoserine (OSHS) and L-cysteine, via a gamma-replacement reaction. In the absence of thiol, catalyzes gamma-elimination to form 2-oxobutanoate, succinate and ammonia. In Saccharomyces cerevisiae (strain ATCC 204508 / S288c) (Baker's yeast), this protein is Cystathionine gamma-synthase.